A 363-amino-acid polypeptide reads, in one-letter code: Protein EXORDIUM-like 5 (363 aa).

An N-terminal signal peptide occupies residues 1-25 (MSSPATTITFFFFFTLSSFFYITSS). Asn-144 carries N-linked (GlcNAc...) asparagine glycosylation.

The protein belongs to the EXORDIUM family.

Its subcellular location is the secreted. The protein localises to the extracellular space. It is found in the apoplast. Its function is as follows. May play a role in a brassinosteroid-dependent regulation of growth and development. The protein is Protein EXORDIUM-like 5 (EXL5) of Arabidopsis thaliana (Mouse-ear cress).